Here is a 264-residue protein sequence, read N- to C-terminus: Caffeoyl-CoA O-methyltransferase 2 (264 aa).

A compositionally biased stretch (low complexity) spans 1–20 (MATTATEATKTTAPAQEQQA). The segment at 1–37 (MATTATEATKTTAPAQEQQANGNGNGEQKTRHSEVGH) is disordered. The segment covering 28-37 (QKTRHSEVGH) has biased composition (basic and acidic residues). Residue Lys38 participates in substrate binding. S-adenosyl-L-methionine is bound by residues Thr80, Glu102, 104–105 (GV), Ser110, Asp128, and Ala157. Asp180 contacts substrate. Residue Asp180 participates in a divalent metal cation binding. Residue Asp182 participates in S-adenosyl-L-methionine binding. A divalent metal cation is bound by residues Asp206 and Asn207. Residue Asn211 participates in substrate binding.

It belongs to the class I-like SAM-binding methyltransferase superfamily. Cation-dependent O-methyltransferase family. CCoAMT subfamily. It depends on a divalent metal cation as a cofactor.

It catalyses the reaction (E)-caffeoyl-CoA + S-adenosyl-L-methionine = (E)-feruloyl-CoA + S-adenosyl-L-homocysteine + H(+). The protein operates within aromatic compound metabolism; phenylpropanoid biosynthesis. Its function is as follows. Methylates caffeoyl-CoA to feruloyl-CoA and 5-hydroxyferuloyl-CoA to sinapoyl-CoA. Plays a role in the synthesis of feruloylated polysaccharides. Involved in the reinforcement of the plant cell wall. Also involved in the responding to wounding or pathogen challenge by the increased formation of cell wall-bound ferulic acid polymers. This is Caffeoyl-CoA O-methyltransferase 2 (CCOAOMT2) from Zea mays (Maize).